We begin with the raw amino-acid sequence, 394 residues long: Putative F-box protein At5g66830 (394 aa).

Positions 17 to 63 (DWCWSKLPSDLMQFVFDRLGFADFQRAKSVCSSWLSVSRNSQPNNQI) constitute an F-box domain.

In Arabidopsis thaliana (Mouse-ear cress), this protein is Putative F-box protein At5g66830.